A 282-amino-acid chain; its full sequence is uncharacterized protein (282 aa).

In terms of domain architecture, HTH rpiR-type spans 4 to 80 (STLTSKLESL…VDYLSDEKQY (77 aa)). A DNA-binding region (H-T-H motif) is located at residues 40–59 (VAELAQAAGVSSASVIRFTR). In terms of domain architecture, SIS spans 125–265 (IAQKIVEAKR…FFKYLTLTNE (141 aa)).

This is an uncharacterized protein from Providencia stuartii.